We begin with the raw amino-acid sequence, 413 residues long: L-cysteine:1D-myo-inositol 2-amino-2-deoxy-alpha-D-glucopyranoside ligase (413 aa).

Cys-15 serves as a coordination point for Zn(2+). L-cysteinyl-5'-AMP-binding positions include 15 to 18 (CGIT), Thr-30, and 53 to 55 (NVT). The short motif at 17 to 27 (ITPYDATHLGH) is the 'HIGH' region element. Positions 155 to 160 (ERGGDP) match the 'ERGGDP' region motif. Trp-195 lines the L-cysteinyl-5'-AMP pocket. Cys-199 serves as a coordination point for Zn(2+). 217-219 (GTD) provides a ligand contact to L-cysteinyl-5'-AMP. His-224 is a binding site for Zn(2+). Val-251 contributes to the L-cysteinyl-5'-AMP binding site. Positions 257–261 (KMSKS) match the 'KMSKS' region motif.

The protein belongs to the class-I aminoacyl-tRNA synthetase family. MshC subfamily. Monomer. Zn(2+) serves as cofactor.

It carries out the reaction 1D-myo-inositol 2-amino-2-deoxy-alpha-D-glucopyranoside + L-cysteine + ATP = 1D-myo-inositol 2-(L-cysteinylamino)-2-deoxy-alpha-D-glucopyranoside + AMP + diphosphate + H(+). Its function is as follows. Catalyzes the ATP-dependent condensation of GlcN-Ins and L-cysteine to form L-Cys-GlcN-Ins. The sequence is that of L-cysteine:1D-myo-inositol 2-amino-2-deoxy-alpha-D-glucopyranoside ligase from Frankia alni (strain DSM 45986 / CECT 9034 / ACN14a).